The following is a 107-amino-acid chain: UPF0060 membrane protein PSHAa1175 (107 aa).

4 consecutive transmembrane segments (helical) span residues 3–23 (IFGLFLITALAEIIGCYLPYL), 30–50 (SVWLLVPAALSLAIFAWLLSL), 60–80 (AAYGGVYIFMAILWLWAVDGI), and 84–104 (TWDLVGSGVALVGMAIIMFAP).

The protein belongs to the UPF0060 family.

The protein localises to the cell inner membrane. This chain is UPF0060 membrane protein PSHAa1175, found in Pseudoalteromonas translucida (strain TAC 125).